The sequence spans 500 residues: NAD(P)H-quinone oxidoreductase chain 4, chloroplastic (500 aa).

A run of 14 helical transmembrane segments spans residues 4–24 (FPWL…IFLL), 37–57 (LCIC…HFQL), 87–107 (IGPI…AWPV), 111–131 (AQLF…SFSS), 134–154 (LLLF…LLSM), 167–187 (FILY…GIGL), 208–228 (ALEV…LPII), 242–262 (HYST…YGLV), 272–292 (AHCL…IYAA), 305–325 (IAYS…SLSD), 330–350 (GAIL…FLAG), 386–406 (LALP…GIIT), 416–436 (ILIA…SLSM), and 462–482 (LFVS…PDFV).

This sequence belongs to the complex I subunit 4 family.

The protein localises to the plastid. The protein resides in the chloroplast thylakoid membrane. The catalysed reaction is a plastoquinone + NADH + (n+1) H(+)(in) = a plastoquinol + NAD(+) + n H(+)(out). It catalyses the reaction a plastoquinone + NADPH + (n+1) H(+)(in) = a plastoquinol + NADP(+) + n H(+)(out). The sequence is that of NAD(P)H-quinone oxidoreductase chain 4, chloroplastic from Oenothera parviflora (Small-flowered evening primrose).